The chain runs to 1026 residues: MNLFNLDRFRFEKRNKIEEAPEATPQPSQPGPSSPISLSAEEENAEGEVSRANTPDSDITEKTEDSSVPETPDNERKASISYFKNQRGIQYIDLSSDSEDVVSPNCSNTVQEKTFNKDTVIIVSEPSEDEESQGLPTMARRNDDISELEDLSELEDLKDAKLQTLKELFPQRSDNDLLKLIESTSTMDGAIAAALLMFGDAGGGPRKRKLSSSSEPYEEDEFNDDQSIKKTRLDHGEESNESAESSSNWEKQESIVLKLQKEFPNFDKQELREVLKEHEWMYTEALESLKVFAEDQDMQYVSQSEVPNGKEVSSRSQNYPKNATKTKLKQKFSMKAQNGFNKKRKKNVFNPKRVVEDSEYDSGSDVGSSLDEDYSSGEEVMEDGYKGKILHFLQDASIGELTLIPQCSQKKAQKITELRPFNSWEALFTKMSKTNGLSEDLIWHCKTLIQERDVVIRLMNKCEDISNKLTKQVTMLTGNGGGWNIEQPSILNQSLSLKPYQKVGLNWLALVHKHGLNGILADEMGLGKTIQAIAFLAYLYQEGNNGPHLIVVPASTIDNWLREVNLWCPTLKVLCYYGSQEERKQIRFNIHSRYEDYNVIVTTYNCAISSSDDRSLFRRLKLNYAIFDEGHMLKNMGSIRYQHLMTINANNRLLLTGTPVQNNLLELMSLLNFVMPHMFSSSTSEIRRMFSSKTKSADEQSIYEKERIAHAKQIIKPFILRRVKEEVLKQLPPKKDRIELCAMSEKQEQLYLGLFNRLKKSINNLEKNTEMCNVMMQLRKMANHPLLHRQYYTAEKLKEMSQLMLKEPTHCEANPDLIFEDMEVMTDFELHVLCKQYRHINNFQLDMDLILDSGKFRVLGCILSELKQKGDRVVLFSQFTMMLDILEVLLKHHQHRYLRLDGKTQISERIHLIDEFNTDMDIFVFLLSTKAGGLGINLTSANVVILHDIDCNPYNDKQAEDRCHRVGQTKEVLVIKLISQGTIEESMLKINQQKLKLEQDMTTVDEGDEGSMPADIATLLKTSMGL.

Met1 is subject to N-acetylmethionine. The tract at residues 1-82 (MNLFNLDRFR…DNERKASISY (82 aa)) is disordered. Over residues 7 to 19 (DRFRFEKRNKIEE) the composition is skewed to basic and acidic residues. A Phosphothreonine modification is found at Thr54. Ser57 bears the Phosphoserine mark. Thr71 bears the Phosphothreonine mark. Lys77 is covalently cross-linked (Glycyl lysine isopeptide (Lys-Gly) (interchain with G-Cter in SUMO2)). A Phosphoserine modification is found at Ser79. Lys84 participates in a covalent cross-link: Glycyl lysine isopeptide (Lys-Gly) (interchain with G-Cter in SUMO2). Residues Ser124, Ser127, Ser132, Ser146, and Ser152 each carry the phosphoserine modification. A CUE 1 domain is found at 157 to 199 (LKDAKLQTLKELFPQRSDNDLLKLIESTSTMDGAIAAALLMFG). Disordered stretches follow at residues 203 to 251 (GGPR…NWEK) and 302 to 328 (SQSE…KTKL). Phosphoserine is present on residues Ser211 and Ser214. At Tyr217 the chain carries Phosphotyrosine. The segment covering 226–238 (QSIKKTRLDHGEE) has biased composition (basic and acidic residues). A phosphoserine mark is found at Ser239 and Ser242. One can recognise a CUE 2 domain in the interval 251-294 (KQESIVLKLQKEFPNFDKQELREVLKEHEWMYTEALESLKVFAE). Phosphoserine is present on Ser302. The segment covering 314–323 (SRSQNYPKNA) has biased composition (polar residues). Lys335 participates in a covalent cross-link: Glycyl lysine isopeptide (Lys-Gly) (interchain with G-Cter in SUMO2). Positions 354 to 373 (VVEDSEYDSGSDVGSSLDED) are disordered. Residue Lys471 forms a Glycyl lysine isopeptide (Lys-Gly) (interchain with G-Cter in SUMO2) linkage. In terms of domain architecture, Helicase ATP-binding spans 509–677 (ALVHKHGLNG…MSLLNFVMPH (169 aa)). 521–529 (ADEMGLGKT) contacts ATP. The DEGH box signature appears at 628–631 (DEGH). Positions 721 to 738 (RRVKEEVLKQLPPKKDRI) match the Nuclear localization signal motif. Residue Lys724 forms a Glycyl lysine isopeptide (Lys-Gly) (interchain with G-Cter in SUMO2) linkage. Positions 858-1010 (VLGCILSELK…MTTVDEGDEG (153 aa)) constitute a Helicase C-terminal domain. An ATP-binding site is contributed by 897 to 904 (YLRLDGKT). Lys996 participates in a covalent cross-link: Glycyl lysine isopeptide (Lys-Gly) (interchain with G-Cter in SUMO2). Positions 1005–1008 (DEGD) match the DEGD box motif.

It belongs to the SNF2/RAD54 helicase family. Binds to DNA preferentially in the vicinity of transcriptional start sites. Interacts with MSH2 and TRIM28. Part of a complex composed of TRIM28, HDAC1, HDAC2 and EHMT2. Interacts with PCNA. Isoform 1 is expressed ubiquitously. Isoform 3 is expressed mainly in skin and esophagus. Expressed in fibroblasts and keratinocytes (at protein level).

The protein localises to the nucleus. It localises to the chromosome. It catalyses the reaction ATP + H2O = ADP + phosphate + H(+). Its function is as follows. DNA helicase that possesses intrinsic ATP-dependent nucleosome-remodeling activity and is both required for DNA repair and heterochromatin organization. Promotes DNA end resection of double-strand breaks (DSBs) following DNA damage: probably acts by weakening histone DNA interactions in nucleosomes flanking DSBs. Required for the restoration of heterochromatin organization after replication. Acts at replication sites to facilitate the maintenance of heterochromatin by directing H3 and H4 histones deacetylation, H3 'Lys-9' trimethylation (H3K9me3) and restoration of silencing. The protein is SWI/SNF-related matrix-associated actin-dependent regulator of chromatin subfamily A containing DEAD/H box 1 of Homo sapiens (Human).